Reading from the N-terminus, the 68-residue chain is Basic phospholipase A2 homolog BdipTx-I (68 aa).

Cys28 and Cys44 are joined by a disulfide.

It belongs to the phospholipase A2 family. Group II subfamily. K49 sub-subfamily. Expressed by the venom gland.

Its subcellular location is the secreted. Snake venom phospholipase A2 (PLA2) that lacks enzymatic activity. Is myotoxic, induces edema, and causes systemic effects (renal changes that lead to proteinuria) on mice. A model of myotoxic mechanism has been proposed: an apo Lys49-PLA2 is activated by the entrance of a hydrophobic molecule (e.g. fatty acid) at the hydrophobic channel of the protein leading to a reorientation of a monomer. This reorientation causes a transition between 'inactive' to 'active' states, causing alignment of C-terminal and membrane-docking sites (MDoS) side-by-side and putting the membrane-disruption sites (MDiS) in the same plane, exposed to solvent and in a symmetric position for both monomers. The MDoS region stabilizes the toxin on membrane by the interaction of charged residues with phospholipid head groups. Subsequently, the MDiS region destabilizes the membrane with penetration of hydrophobic residues. This insertion causes a disorganization of the membrane, allowing an uncontrolled influx of ions (i.e. calcium and sodium), and eventually triggering irreversible intracellular alterations and cell death. This is Basic phospholipase A2 homolog BdipTx-I from Bothrops diporus (Chaco lancehead).